Consider the following 537-residue polypeptide: MNLIEFPWLTAIIALPLVAALAIPIIPDKEGKTVRWYGLGVAFADFALMIAAFWHYYDFQSSTYQFVEKYHWLPQIGLNWSVAVDGLSMPLLLLTGLINTLAIFAAWKVTNKPRLFYGLMLVMYSAQLGVFVAQDLLLFFLMWEIELVPVYLLISIWGGPKRRYAATKFILYTAAASIFILVAGFALAFSGDTVTFDIAALGMKEYPKAIELLAYAGFLIAFGVKLPIFPLHTWLPDAHGEASAPGSMILAGVLLKMGGYALIRFNIEMLPDAHVYFAPVLAILGVVNIVYGACCAFAQTNLKRRLAYSSIAHMGFVLIGLASYTEIGVSGAVLQMVSHGLVAASLFFLTGVTYERTHTLLMDKMGGIGKVMPKTFALYTAGAMASLALPGMSGFVGELMVFIGIATSDVYSSSFKVVVVLLSAVGVILTPIYLLSLLRQVFYGKQSEELHLDAFIPDVKPRELFITASLLLPIIGIGLYPKLITQTYDVKTVEIAAHARQVLPVVAGQQPSSLYSQIFTAPTLANAEVESLVNISK.

Helical transmembrane passes span 6 to 26 (FPWL…IPII), 36 to 56 (WYGL…FWHY), 87 to 107 (LSMP…FAAW), 115 to 135 (LFYG…VAQD), 136 to 156 (LLLF…LISI), 169 to 189 (FILY…ALAF), 209 to 229 (AIEL…LPIF), 243 to 263 (SAPG…YALI), 277 to 297 (FAPV…CCAF), 314 to 334 (MGFV…GAVL), 335 to 355 (QMVS…VTYE), 387 to 407 (LALP…GIAT), and 417 to 437 (VVVV…LLSL).

It belongs to the complex I subunit 4 family.

The protein resides in the cellular thylakoid membrane. It catalyses the reaction a plastoquinone + NADH + (n+1) H(+)(in) = a plastoquinol + NAD(+) + n H(+)(out). The catalysed reaction is a plastoquinone + NADPH + (n+1) H(+)(in) = a plastoquinol + NADP(+) + n H(+)(out). Its function is as follows. NDH-1 shuttles electrons from NAD(P)H, via FMN and iron-sulfur (Fe-S) centers, to quinones in the respiratory chain. The immediate electron acceptor for the enzyme in this species is believed to be plastoquinone. Couples the redox reaction to proton translocation (for every two electrons transferred, four hydrogen ions are translocated across the cytoplasmic membrane), and thus conserves the redox energy in a proton gradient. This is NAD(P)H-quinone oxidoreductase chain 4 3 from Trichormus variabilis (strain ATCC 29413 / PCC 7937) (Anabaena variabilis).